A 106-amino-acid polypeptide reads, in one-letter code: Nucleoid-associated protein DP1429 (106 aa).

It belongs to the YbaB/EbfC family. As to quaternary structure, homodimer.

It is found in the cytoplasm. The protein localises to the nucleoid. Functionally, binds to DNA and alters its conformation. May be involved in regulation of gene expression, nucleoid organization and DNA protection. The sequence is that of Nucleoid-associated protein DP1429 from Desulfotalea psychrophila (strain LSv54 / DSM 12343).